The primary structure comprises 231 residues: UPF0653 protein C607.02c (231 aa).

Disordered stretches follow at residues 1 to 33, 47 to 68, 93 to 132, and 147 to 178; these read MPTK…VDDN, YHES…KKDY, SFKS…ENFE, and IESR…APPE. Positions 9–27 are enriched in basic and acidic residues; the sequence is SVLEAERKKIGLDHAPKED. Basic residues-rich tracts occupy residues 53–67 and 109–119; these read KEIK…KKKD and EKKKIAKRKEK.

Belongs to the UPF0653 family.

Its subcellular location is the nucleus. The protein resides in the nucleolus. The chain is UPF0653 protein C607.02c from Schizosaccharomyces pombe (strain 972 / ATCC 24843) (Fission yeast).